A 563-amino-acid polypeptide reads, in one-letter code: PTS system fructose-specific EIIB'BC component (563 aa).

PTS EIIB type-2 domains are found at residues 1-85 and 104-201; these read MKTL…KGHA and KRVV…KAVA. Cysteine 112 serves as the catalytic Phosphocysteine intermediate; for EIIB activity. Cysteine 112 is subject to Phosphocysteine; by EIIA. One can recognise a PTS EIIC type-2 domain in the interval 226 to 561; it reads AYRHLLTGVS…KRPEVDAVAK (336 aa). A run of 9 helical transmembrane segments spans residues 236–256, 274–294, 304–324, 349–369, 382–402, 430–450, 463–483, 489–509, and 518–538; these read YMLP…AFGI, GGSA…FSIA, IGGM…IAGF, ILII…YLIG, WLQT…GGMM, MAAI…ATMV, GKAA…PFAA, VLPC…AIGA, and LFVL…VAII.

The protein resides in the cell inner membrane. It catalyses the reaction D-fructose(out) + N(pros)-phospho-L-histidyl-[protein] = D-fructose 1-phosphate(in) + L-histidyl-[protein]. Its function is as follows. The phosphoenolpyruvate-dependent sugar phosphotransferase system (sugar PTS), a major carbohydrate active transport system, catalyzes the phosphorylation of incoming sugar substrates concomitantly with their translocation across the cell membrane. The enzyme II FruAB PTS system is involved in fructose transport. This is PTS system fructose-specific EIIB'BC component from Escherichia coli (strain K12).